Here is a 683-residue protein sequence, read N- to C-terminus: Methionine--tRNA ligase (683 aa).

The short motif at proline 15–histidine 25 is the 'HIGH' region element. Residues cysteine 146, cysteine 149, cysteine 159, and cysteine 162 each coordinate Zn(2+). The 'KMSKS' region motif lies at lysine 332–serine 336. Lysine 335 contributes to the ATP binding site. Residues aspartate 582–lysine 683 form the tRNA-binding domain.

Belongs to the class-I aminoacyl-tRNA synthetase family. MetG type 1 subfamily. As to quaternary structure, homodimer. The cofactor is Zn(2+).

It is found in the cytoplasm. The enzyme catalyses tRNA(Met) + L-methionine + ATP = L-methionyl-tRNA(Met) + AMP + diphosphate. Its function is as follows. Is required not only for elongation of protein synthesis but also for the initiation of all mRNA translation through initiator tRNA(fMet) aminoacylation. This Shewanella frigidimarina (strain NCIMB 400) protein is Methionine--tRNA ligase.